Reading from the N-terminus, the 300-residue chain is Histone deacetylase HDT3 (300 aa).

A compositionally biased stretch (acidic residues) spans 98 to 112; it reads EDEMDLDSEDEDEEL. The segment at 98 to 300 is disordered; that stretch reads EDEMDLDSED…AHSKAKHGGK (203 aa). Residues 119–132 are compositionally biased toward basic and acidic residues; the sequence is ENGKADEKKQKSQE. A compositionally biased stretch (acidic residues) spans 151–197; that stretch reads DDDSDEDETDDSDEDETDDSDEGLSPEEGDDDSSDEDDTSDDEEEDT. Residues 198 to 211 show a composition bias toward basic and acidic residues; it reads PTPKKPEVGKKRAA. Over residues 265–275 the composition is skewed to low complexity; that stretch reads SPKSAPKSGVP. The segment at 274–297 adopts a C2H2-type zinc-finger fold; the sequence is VPCKSCSKSFISETAPQAHSKAKH. A compositionally biased stretch (polar residues) spans 279–290; it reads CSKSFISETAPQ.

The protein belongs to the histone deacetylase HD2 family. Multimer. Possibly forms a homotrimer with HDT1 and/or HDT2.

The protein localises to the nucleus. It is found in the nucleolus. Mediates the deacetylation of lysine residues on the N-terminal part of the core histones (H2A, H2B, H3 and H4). Histone deacetylation gives a tag for epigenetic repression and plays an important role in transcriptional regulation, cell cycle progression and developmental events. This chain is Histone deacetylase HDT3 (HDT3), found in Zea mays (Maize).